The chain runs to 341 residues: MAQITAKMVKELRERTGAGVMDAKKALVEVDGDMDKAVEFLREKGMAKAAKKADRVAAEGLTGVYVADNVAAVTEINSETDFVSQNDKFVKLVKDVTKTIAEGKPANIEEADELKMDDGSTLDQAFVNATATIGEKIVLRRFALEEKTDDQEFGAYQHNGGQIGVITVLEGADAATAKHLAMHIAAMNPKVISPDELDDEFITEQLALMNHKIDQDNESRELVHKKPLPHLVYGSEKQLTDDVLAKAKEDIKAELKEEGKPEKIWDRIIPGKMQRFIDDNTQVDKQFAVLSQDYIMDDSKTVGEFLKEKGAKLVAFQRFEVGEGIEKKQEDFAAEVREQMK.

The segment at 80–83 (TDFV) is involved in Mg(2+) ion dislocation from EF-Tu.

It belongs to the EF-Ts family.

Its subcellular location is the cytoplasm. Functionally, associates with the EF-Tu.GDP complex and induces the exchange of GDP to GTP. It remains bound to the aminoacyl-tRNA.EF-Tu.GTP complex up to the GTP hydrolysis stage on the ribosome. The chain is Elongation factor Ts from Lactobacillus acidophilus (strain ATCC 700396 / NCK56 / N2 / NCFM).